Reading from the N-terminus, the 288-residue chain is Acetyl-coenzyme A carboxylase carboxyl transferase subunit beta (288 aa).

One can recognise a CoA carboxyltransferase N-terminal domain in the interval L34–Q288. Zn(2+) is bound by residues C38, C41, C56, and C59. Residues C38–C59 form a C4-type zinc finger.

Belongs to the AccD/PCCB family. In terms of assembly, acetyl-CoA carboxylase is a heterohexamer composed of biotin carboxyl carrier protein (AccB), biotin carboxylase (AccC) and two subunits each of ACCase subunit alpha (AccA) and ACCase subunit beta (AccD). Requires Zn(2+) as cofactor.

It is found in the cytoplasm. It catalyses the reaction N(6)-carboxybiotinyl-L-lysyl-[protein] + acetyl-CoA = N(6)-biotinyl-L-lysyl-[protein] + malonyl-CoA. Its pathway is lipid metabolism; malonyl-CoA biosynthesis; malonyl-CoA from acetyl-CoA: step 1/1. In terms of biological role, component of the acetyl coenzyme A carboxylase (ACC) complex. Biotin carboxylase (BC) catalyzes the carboxylation of biotin on its carrier protein (BCCP) and then the CO(2) group is transferred by the transcarboxylase to acetyl-CoA to form malonyl-CoA. The protein is Acetyl-coenzyme A carboxylase carboxyl transferase subunit beta of Streptococcus pyogenes serotype M3 (strain ATCC BAA-595 / MGAS315).